The following is a 177-amino-acid chain: Large ribosomal subunit protein uL6 (177 aa).

At Lys-44 the chain carries N6-acetyllysine.

It belongs to the universal ribosomal protein uL6 family. In terms of assembly, part of the 50S ribosomal subunit.

Functionally, this protein binds to the 23S rRNA, and is important in its secondary structure. It is located near the subunit interface in the base of the L7/L12 stalk, and near the tRNA binding site of the peptidyltransferase center. The chain is Large ribosomal subunit protein uL6 from Escherichia fergusonii (strain ATCC 35469 / DSM 13698 / CCUG 18766 / IAM 14443 / JCM 21226 / LMG 7866 / NBRC 102419 / NCTC 12128 / CDC 0568-73).